The sequence spans 330 residues: Lipoyl synthase (330 aa).

Positions 1 to 31 (MSDAPIATSSEVTQSPADYDPTKKQKSAEKT) are disordered. A compositionally biased stretch (polar residues) spans 7–16 (ATSSEVTQSP). Basic and acidic residues predominate over residues 20–31 (DPTKKQKSAEKT). [4Fe-4S] cluster is bound by residues C77, C82, C88, C103, C107, C110, and S317. Positions 88-306 (CFGKGTATFM…EEEAYKMGFT (219 aa)) constitute a Radical SAM core domain.

The protein belongs to the radical SAM superfamily. Lipoyl synthase family. [4Fe-4S] cluster serves as cofactor.

The protein localises to the cytoplasm. It catalyses the reaction [[Fe-S] cluster scaffold protein carrying a second [4Fe-4S](2+) cluster] + N(6)-octanoyl-L-lysyl-[protein] + 2 oxidized [2Fe-2S]-[ferredoxin] + 2 S-adenosyl-L-methionine + 4 H(+) = [[Fe-S] cluster scaffold protein] + N(6)-[(R)-dihydrolipoyl]-L-lysyl-[protein] + 4 Fe(3+) + 2 hydrogen sulfide + 2 5'-deoxyadenosine + 2 L-methionine + 2 reduced [2Fe-2S]-[ferredoxin]. The protein operates within protein modification; protein lipoylation via endogenous pathway; protein N(6)-(lipoyl)lysine from octanoyl-[acyl-carrier-protein]: step 2/2. Catalyzes the radical-mediated insertion of two sulfur atoms into the C-6 and C-8 positions of the octanoyl moiety bound to the lipoyl domains of lipoate-dependent enzymes, thereby converting the octanoylated domains into lipoylated derivatives. This chain is Lipoyl synthase, found in Cupriavidus metallidurans (strain ATCC 43123 / DSM 2839 / NBRC 102507 / CH34) (Ralstonia metallidurans).